The primary structure comprises 242 residues: uncharacterized protein (242 aa).

Residues 3-116 (TALVIDDEQF…RLNKTVKRLN (114 aa)) form the Response regulatory domain. At Asp54 the chain carries 4-aspartylphosphate. The HTH LytTR-type domain occupies 139–240 (IPCIGHNRIV…LKVLKEMLGI (102 aa)).

This is an uncharacterized protein from Vibrio parahaemolyticus serotype O3:K6 (strain RIMD 2210633).